The primary structure comprises 568 residues: DNA ligase 2 (568 aa).

E254 lines the ATP pocket. Catalysis depends on K256, which acts as the N6-AMP-lysine intermediate. Residues R261, R276, E306, F346, R425, and K431 each coordinate ATP.

The protein belongs to the ATP-dependent DNA ligase family. The cofactor is Mg(2+).

The catalysed reaction is ATP + (deoxyribonucleotide)n-3'-hydroxyl + 5'-phospho-(deoxyribonucleotide)m = (deoxyribonucleotide)n+m + AMP + diphosphate.. Functionally, DNA ligase that seals nicks in double-stranded DNA during DNA replication, DNA recombination and DNA repair. This is DNA ligase 2 from Methanosarcina acetivorans (strain ATCC 35395 / DSM 2834 / JCM 12185 / C2A).